The primary structure comprises 493 residues: Isoniazid-induced protein IniC (493 aa).

The polypeptide is Isoniazid-induced protein IniC (iniC) (Mycobacterium tuberculosis (strain CDC 1551 / Oshkosh)).